A 479-amino-acid polypeptide reads, in one-letter code: Lysosomal protective protein (479 aa).

An N-terminal signal peptide occupies residues 1-27; the sequence is MFRAALWPPVLLLLQLLLLACAPGGEG. Intrachain disulfides connect Cys-87/Cys-361, Cys-239/Cys-255, Cys-240/Cys-245, and Cys-280/Cys-330. N-linked (GlcNAc...) asparagine glycosylation occurs at Asn-144. Residue Ser-177 is part of the active site. Asn-332 carries an N-linked (GlcNAc...) asparagine glycan. Catalysis depends on residues Asp-399 and His-456.

The protein belongs to the peptidase S10 family. In terms of assembly, heterodimer of a 32 kDa chain and a 20 kDa chain; disulfide-linked.

It is found in the lysosome. It catalyses the reaction Release of a C-terminal amino acid with broad specificity.. Its function is as follows. Protective protein appears to be essential for both the activity of beta-galactosidase and neuraminidase, it associates with these enzymes and exerts a protective function necessary for their stability and activity. This protein is also a carboxypeptidase and can deamidate tachykinins. The protein is Lysosomal protective protein (CTSA) of Bos taurus (Bovine).